The following is a 212-amino-acid chain: Pyrrolidone-carboxylate peptidase (212 aa).

Active-site residues include Glu78, Cys141, and His165.

Belongs to the peptidase C15 family. As to quaternary structure, homotetramer.

It is found in the cytoplasm. The catalysed reaction is Release of an N-terminal pyroglutamyl group from a polypeptide, the second amino acid generally not being Pro.. In terms of biological role, removes 5-oxoproline from various penultimate amino acid residues except L-proline. In Staphylococcus aureus (strain NCTC 8325 / PS 47), this protein is Pyrrolidone-carboxylate peptidase.